Here is a 367-residue protein sequence, read N- to C-terminus: 3-isopropylmalate dehydrogenase (367 aa).

75–88 (GPKWDGIERSKRPE) is a binding site for NAD(+). The substrate site is built by Arg95, Arg105, Arg133, and Asp230. Mg(2+)-binding residues include Asp230, Asp254, and Asp258. Position 288–300 (288–300 (GSAPDIAGQDIAN)) interacts with NAD(+).

It belongs to the isocitrate and isopropylmalate dehydrogenases family. LeuB type 1 subfamily. Homodimer. Mg(2+) is required as a cofactor. Mn(2+) serves as cofactor.

The protein localises to the cytoplasm. The catalysed reaction is (2R,3S)-3-isopropylmalate + NAD(+) = 4-methyl-2-oxopentanoate + CO2 + NADH. The protein operates within amino-acid biosynthesis; L-leucine biosynthesis; L-leucine from 3-methyl-2-oxobutanoate: step 3/4. Functionally, catalyzes the oxidation of 3-carboxy-2-hydroxy-4-methylpentanoate (3-isopropylmalate) to 3-carboxy-4-methyl-2-oxopentanoate. The product decarboxylates to 4-methyl-2 oxopentanoate. The protein is 3-isopropylmalate dehydrogenase of Psychrobacter cryohalolentis (strain ATCC BAA-1226 / DSM 17306 / VKM B-2378 / K5).